Here is a 174-residue protein sequence, read N- to C-terminus: Urease accessory protein UreE (174 aa).

The segment at 146 to 174 is disordered; the sequence is NGAYATGGHAHDHDGEPEHVHGPGCQHAH. Basic and acidic residues predominate over residues 154 to 166; sequence HAHDHDGEPEHVH.

It belongs to the UreE family.

It localises to the cytoplasm. Its function is as follows. Involved in urease metallocenter assembly. Binds nickel. Probably functions as a nickel donor during metallocenter assembly. This Albidiferax ferrireducens (strain ATCC BAA-621 / DSM 15236 / T118) (Rhodoferax ferrireducens) protein is Urease accessory protein UreE.